A 100-amino-acid chain; its full sequence is NAD(P)H-quinone oxidoreductase subunit 4L, chloroplastic (100 aa).

Helical transmembrane passes span 1–21 (MLEHILSLGAYLFCIGIFGLI), 29–49 (ALMCLELIFNAVNINLITFSN), and 60–80 (IFAIFIIAIAAAEAAIGLAIV).

It belongs to the complex I subunit 4L family. As to quaternary structure, NDH is composed of at least 16 different subunits, 5 of which are encoded in the nucleus.

Its subcellular location is the plastid. The protein resides in the chloroplast thylakoid membrane. It catalyses the reaction a plastoquinone + NADH + (n+1) H(+)(in) = a plastoquinol + NAD(+) + n H(+)(out). The catalysed reaction is a plastoquinone + NADPH + (n+1) H(+)(in) = a plastoquinol + NADP(+) + n H(+)(out). In terms of biological role, NDH shuttles electrons from NAD(P)H:plastoquinone, via FMN and iron-sulfur (Fe-S) centers, to quinones in the photosynthetic chain and possibly in a chloroplast respiratory chain. The immediate electron acceptor for the enzyme in this species is believed to be plastoquinone. Couples the redox reaction to proton translocation, and thus conserves the redox energy in a proton gradient. This Physcomitrium patens (Spreading-leaved earth moss) protein is NAD(P)H-quinone oxidoreductase subunit 4L, chloroplastic.